The following is a 320-amino-acid chain: Cytochrome f (320 aa).

A signal peptide spans 1–35; sequence MENRKTFSWLKEQMIRSISVSIMIYVITRTSISNA. Residues Y36, C56, C59, and H60 each coordinate heme. Residues 286–305 form a helical membrane-spanning segment; the sequence is VQGLLFFFASVILAQVFLVL.

It belongs to the cytochrome f family. As to quaternary structure, the 4 large subunits of the cytochrome b6-f complex are cytochrome b6, subunit IV (17 kDa polypeptide, petD), cytochrome f and the Rieske protein, while the 4 small subunits are PetG, PetL, PetM and PetN. The complex functions as a dimer. Heme is required as a cofactor.

It is found in the plastid. The protein resides in the chloroplast thylakoid membrane. Functionally, component of the cytochrome b6-f complex, which mediates electron transfer between photosystem II (PSII) and photosystem I (PSI), cyclic electron flow around PSI, and state transitions. The chain is Cytochrome f (petA) from Zea mays (Maize).